The chain runs to 444 residues: Trigger factor (444 aa).

Positions 160 to 245 (DMQVTFDFEG…VKQVEKPKLP (86 aa)) constitute a PPIase FKBP-type domain.

Belongs to the FKBP-type PPIase family. Tig subfamily.

The protein localises to the cytoplasm. It catalyses the reaction [protein]-peptidylproline (omega=180) = [protein]-peptidylproline (omega=0). Functionally, involved in protein export. Acts as a chaperone by maintaining the newly synthesized protein in an open conformation. Functions as a peptidyl-prolyl cis-trans isomerase. The protein is Trigger factor of Acinetobacter baumannii (strain SDF).